We begin with the raw amino-acid sequence, 273 residues long: Methylthioribulose-1-phosphate dehydratase (273 aa).

The disordered stretch occupies residues 1–27 (MCPTCPPSAASASSENNNTDNNDHLVL). Residue cysteine 114 coordinates substrate. Zn(2+) is bound by residues histidine 132 and histidine 134. The active-site Proton donor/acceptor is the glutamate 168. Histidine 225 serves as a coordination point for Zn(2+).

Belongs to the aldolase class II family. MtnB subfamily. It depends on Zn(2+) as a cofactor.

It localises to the cytoplasm. It carries out the reaction 5-(methylsulfanyl)-D-ribulose 1-phosphate = 5-methylsulfanyl-2,3-dioxopentyl phosphate + H2O. It functions in the pathway amino-acid biosynthesis; L-methionine biosynthesis via salvage pathway; L-methionine from S-methyl-5-thio-alpha-D-ribose 1-phosphate: step 2/6. In terms of biological role, catalyzes the dehydration of methylthioribulose-1-phosphate (MTRu-1-P) into 2,3-diketo-5-methylthiopentyl-1-phosphate (DK-MTP-1-P). This chain is Methylthioribulose-1-phosphate dehydratase, found in Sordaria macrospora (strain ATCC MYA-333 / DSM 997 / K(L3346) / K-hell).